Consider the following 274-residue polypeptide: Ribosomal RNA small subunit methyltransferase A (274 aa).

Residues His15, Leu17, Gly42, Glu64, Asp89, and Asn109 each coordinate S-adenosyl-L-methionine.

This sequence belongs to the class I-like SAM-binding methyltransferase superfamily. rRNA adenine N(6)-methyltransferase family. RsmA subfamily.

The protein localises to the cytoplasm. The enzyme catalyses adenosine(1518)/adenosine(1519) in 16S rRNA + 4 S-adenosyl-L-methionine = N(6)-dimethyladenosine(1518)/N(6)-dimethyladenosine(1519) in 16S rRNA + 4 S-adenosyl-L-homocysteine + 4 H(+). Specifically dimethylates two adjacent adenosines (A1518 and A1519) in the loop of a conserved hairpin near the 3'-end of 16S rRNA in the 30S particle. May play a critical role in biogenesis of 30S subunits. The polypeptide is Ribosomal RNA small subunit methyltransferase A (Synechococcus sp. (strain CC9605)).